The following is a 304-amino-acid chain: tRNA U34 carboxymethyltransferase (304 aa).

Carboxy-S-adenosyl-L-methionine is bound by residues Lys-73, Trp-87, Lys-92, Gly-111, 133–135 (DPS), 160–161 (VE), Tyr-180, and Arg-295.

The protein belongs to the class I-like SAM-binding methyltransferase superfamily. CmoB family. Homotetramer.

It catalyses the reaction carboxy-S-adenosyl-L-methionine + 5-hydroxyuridine(34) in tRNA = 5-carboxymethoxyuridine(34) in tRNA + S-adenosyl-L-homocysteine + H(+). Its function is as follows. Catalyzes carboxymethyl transfer from carboxy-S-adenosyl-L-methionine (Cx-SAM) to 5-hydroxyuridine (ho5U) to form 5-carboxymethoxyuridine (cmo5U) at position 34 in tRNAs. In Aliarcobacter butzleri (strain RM4018) (Arcobacter butzleri), this protein is tRNA U34 carboxymethyltransferase.